Here is a 364-residue protein sequence, read N- to C-terminus: Protein MGF 360-18R (364 aa).

Belongs to the asfivirus MGF 360 family.

Its function is as follows. Plays a role in virus cell tropism, and may be required for efficient virus replication in macrophages. This is Protein MGF 360-18R from African swine fever virus (isolate Tick/South Africa/Pretoriuskop Pr4/1996) (ASFV).